A 153-amino-acid polypeptide reads, in one-letter code: Regulator of ribonuclease activity B (153 aa).

Residues 114 to 153 form a disordered region; the sequence is DPNADDDEYGDDGEFLDDEDEYGDDGEFFDDEDEEEPRVH. The segment covering 115–153 has biased composition (acidic residues); that stretch reads PNADDDEYGDDGEFLDDEDEYGDDGEFFDDEDEEEPRVH.

It belongs to the RraB family. As to quaternary structure, interacts with the C-terminal region of Rne.

It is found in the cytoplasm. Globally modulates RNA abundance by binding to RNase E (Rne) and regulating its endonucleolytic activity. Can modulate Rne action in a substrate-dependent manner by altering the composition of the degradosome. The polypeptide is Regulator of ribonuclease activity B (Haemophilus influenzae (strain ATCC 51907 / DSM 11121 / KW20 / Rd)).